The following is a 148-amino-acid chain: UPF0179 protein Ta1159 (148 aa).

The protein belongs to the UPF0179 family.

This chain is UPF0179 protein Ta1159, found in Thermoplasma acidophilum (strain ATCC 25905 / DSM 1728 / JCM 9062 / NBRC 15155 / AMRC-C165).